We begin with the raw amino-acid sequence, 186 residues long: Putative CTD phosphatase-like protein 355R (186 aa).

An FCP1 homology domain is found at 2–182 (ENNKKKLILL…TELLKVQKTL (181 aa)).

This sequence belongs to the IIV-6 355R family.

In terms of biological role, may function as a phosphatase. This chain is Putative CTD phosphatase-like protein 355R, found in Aedes vexans (Inland floodwater mosquito).